The sequence spans 435 residues: Eukaryotic peptide chain release factor subunit 1-3 (435 aa).

The residue at position 2 (Ala-2) is an N-acetylalanine.

The protein belongs to the eukaryotic release factor 1 family. In terms of assembly, heterodimer of two subunits, one of which binds GTP.

Its subcellular location is the cytoplasm. Its function is as follows. Directs the termination of nascent peptide synthesis (translation) in response to the termination codons UAA, UAG and UGA. Modulates plant growth and development. This chain is Eukaryotic peptide chain release factor subunit 1-3 (ERF1-3), found in Arabidopsis thaliana (Mouse-ear cress).